The sequence spans 160 residues: Nucleotide-binding protein VV1636 (160 aa).

It belongs to the YajQ family.

Functionally, nucleotide-binding protein. This chain is Nucleotide-binding protein VV1636, found in Vibrio vulnificus (strain YJ016).